The following is a 328-amino-acid chain: Acetyl-coenzyme A carboxylase carboxyl transferase subunit alpha (328 aa).

One can recognise a CoA carboxyltransferase C-terminal domain in the interval 42–296 (SFKEQLSILK…KESLISELHF (255 aa)).

Belongs to the AccA family. In terms of assembly, acetyl-CoA carboxylase is a heterohexamer composed of biotin carboxyl carrier protein (accB), biotin carboxylase (accC) and two subunits each of ACCase subunit alpha (accA) and ACCase subunit beta (accD).

It localises to the plastid. Its subcellular location is the chloroplast. The catalysed reaction is N(6)-carboxybiotinyl-L-lysyl-[protein] + acetyl-CoA = N(6)-biotinyl-L-lysyl-[protein] + malonyl-CoA. It functions in the pathway lipid metabolism; malonyl-CoA biosynthesis; malonyl-CoA from acetyl-CoA: step 1/1. Component of the acetyl coenzyme A carboxylase (ACC) complex. First, biotin carboxylase catalyzes the carboxylation of biotin on its carrier protein (BCCP) and then the CO(2) group is transferred by the carboxyltransferase to acetyl-CoA to form malonyl-CoA. The polypeptide is Acetyl-coenzyme A carboxylase carboxyl transferase subunit alpha (Gracilaria tenuistipitata var. liui (Red alga)).